The following is a 415-amino-acid chain: Casein kinase I isoform delta (415 aa).

Residues 9–277 form the Protein kinase domain; the sequence is YRLGRKIGSG…YLRQLFRNLF (269 aa). ATP contacts are provided by residues 15-23 and Lys-38; that span reads IGSGSFGDI. The active-site Proton acceptor is the Asp-128. Residues 278–364 form a centrosomal localization signal (CLS) region; that stretch reads HRQGFSYDYV…TSPRPVSGME (87 aa). Over residues 301–315 the composition is skewed to basic and acidic residues; that stretch reads ADDAERERRDREERL. The segment at 301–415 is disordered; sequence ADDAERERRD…SSGLQSVVHR (115 aa). Residues 317 to 342 are autoinhibitory; sequence HSRNPATRGLPSTASGRLRGTQEVAP. Phosphoserine occurs at positions 328 and 331. A compositionally biased stretch (polar residues) spans 347–358; sequence TPTSHTANTSPR. Ser-370 is modified (phosphoserine). Arg-375 is subject to Omega-N-methylarginine. Over residues 380–400 the composition is skewed to polar residues; the sequence is NISSSDLTGRQDTSRMSTSQI. Phosphoserine occurs at positions 382, 383, 384, 407, and 411.

This sequence belongs to the protein kinase superfamily. CK1 Ser/Thr protein kinase family. Casein kinase I subfamily. In terms of assembly, monomer. Component of the circadian core oscillator, which includes the CRY proteins, CLOCK, or NPAS2, ARTNL/BMAL1 or ARTNL2/BMAL2, CSNK1D and/or CSNK1E, TIMELESS and the PER proteins. Interacts with DNMT1 and MAP1A. Interacts directly with PER1 and PER2 which may lead to their degradation. Interacts with MAPT/TAU, SNAPIN, DBNDD2, AIB1/NCOA3 and ESR1. Interacts with AKAP9/AKAP450; this interaction promotes centrosomal subcellular location. Binds to tubulins in mitotic cells upon DNA damage. Interacts with GJA1. Interacts with DDX3X; this interaction enhances CSNK1D kinase activity in vitro, but it is unclear whether this interaction is physiologically relevant. Interacts with FAM83A, FAM83B, FAM83E and FAM83H (via DUF1669). In terms of processing, autophosphorylated on serine and threonine residues; this autophosphorylation represses activity. Reactivated by phosphatase-mediated dephosphorylation. May be dephosphorylated by PP1.

It localises to the cytoplasm. Its subcellular location is the nucleus. It is found in the cytoskeleton. The protein resides in the microtubule organizing center. The protein localises to the centrosome. It localises to the perinuclear region. Its subcellular location is the cell membrane. It is found in the spindle. The protein resides in the golgi apparatus. The catalysed reaction is L-seryl-[protein] + ATP = O-phospho-L-seryl-[protein] + ADP + H(+). The enzyme catalyses L-threonyl-[protein] + ATP = O-phospho-L-threonyl-[protein] + ADP + H(+). It catalyses the reaction L-seryl-[tau protein] + ATP = O-phospho-L-seryl-[tau protein] + ADP + H(+). It carries out the reaction L-threonyl-[tau protein] + ATP = O-phospho-L-threonyl-[tau protein] + ADP + H(+). Its activity is regulated as follows. Drug-mediated inhibition leads to a delay of the oscillations with the magnitude of this effect dependent upon the timing of drug administration. Inhibited by phosphorylation. Exhibits substrate-dependent heparin activation. Essential serine/threonine-protein kinase that regulates diverse cellular growth and survival processes including Wnt signaling, DNA repair and circadian rhythms. It can phosphorylate a large number of proteins. Casein kinases are operationally defined by their preferential utilization of acidic proteins such as caseins as substrates. Phosphorylates connexin-43/GJA1, MAP1A, SNAPIN, MAPT/TAU, TOP2A, DCK, HIF1A, EIF6, p53/TP53, DVL2, DVL3, ESR1, AIB1/NCOA3, DNMT1, PKD2, YAP1, PER1 and PER2. Central component of the circadian clock. In balance with PP1, determines the circadian period length through the regulation of the speed and rhythmicity of PER1 and PER2 phosphorylation. Controls PER1 and PER2 nuclear transport and degradation. YAP1 phosphorylation promotes its SCF(beta-TRCP) E3 ubiquitin ligase-mediated ubiquitination and subsequent degradation. DNMT1 phosphorylation reduces its DNA-binding activity. Phosphorylation of ESR1 and AIB1/NCOA3 stimulates their activity and coactivation. Phosphorylation of DVL2 and DVL3 regulates WNT3A signaling pathway that controls neurite outgrowth. Phosphorylates NEDD9/HEF1. EIF6 phosphorylation promotes its nuclear export. Triggers down-regulation of dopamine receptors in the forebrain. Activates DCK in vitro by phosphorylation. TOP2A phosphorylation favors DNA cleavable complex formation. May regulate the formation of the mitotic spindle apparatus in extravillous trophoblast. Modulates connexin-43/GJA1 gap junction assembly by phosphorylation. Probably involved in lymphocyte physiology. Regulates fast synaptic transmission mediated by glutamate. In Bos taurus (Bovine), this protein is Casein kinase I isoform delta (CSNK1D).